The primary structure comprises 66 residues: uncharacterized protein (66 aa).

Transmembrane regions (helical) follow at residues 3–23 (LIHV…PFAN) and 34–54 (FILA…AIVY).

Its subcellular location is the cell membrane. This is an uncharacterized protein from Bacillus subtilis (strain 168).